The following is a 173-amino-acid chain: NAD(P)H-quinone oxidoreductase subunit J (173 aa).

This sequence belongs to the complex I 30 kDa subunit family. NDH-1 can be composed of about 15 different subunits; different subcomplexes with different compositions have been identified which probably have different functions.

The protein resides in the cellular thylakoid membrane. It carries out the reaction a plastoquinone + NADH + (n+1) H(+)(in) = a plastoquinol + NAD(+) + n H(+)(out). The enzyme catalyses a plastoquinone + NADPH + (n+1) H(+)(in) = a plastoquinol + NADP(+) + n H(+)(out). In terms of biological role, NDH-1 shuttles electrons from an unknown electron donor, via FMN and iron-sulfur (Fe-S) centers, to quinones in the respiratory and/or the photosynthetic chain. The immediate electron acceptor for the enzyme in this species is believed to be plastoquinone. Couples the redox reaction to proton translocation, and thus conserves the redox energy in a proton gradient. Cyanobacterial NDH-1 also plays a role in inorganic carbon-concentration. This Prochlorococcus marinus (strain NATL1A) protein is NAD(P)H-quinone oxidoreductase subunit J.